We begin with the raw amino-acid sequence, 140 residues long: Ergosterol biosynthetic protein 28 homolog (140 aa).

Helical transmembrane passes span 4–24, 52–72, 79–99, and 105–125; these read FLNVLRSWLVMVSIIAMGNTL, TFGIWTLLSSVIRCLCAIDIH, ITLWTFLLALGHFLSELFVFG, and VGVLAPLMVASFSILGMLVGL.

This sequence belongs to the ERG28 family.

It is found in the endoplasmic reticulum membrane. This chain is Ergosterol biosynthetic protein 28 homolog, found in Mus musculus (Mouse).